Here is a 244-residue protein sequence, read N- to C-terminus: Ras-related protein Rab-12 (244 aa).

Position 1 is an N-acetylmethionine (Met1). A compositionally biased stretch (low complexity) spans Met1–Arg10. Residues Met1–Arg37 form a disordered region. 2 positions are modified to phosphoserine: Ser21 and Ser25. Position 52 (Gly52) interacts with GDP. Residues Gly52, Val53, Gly54, Lys55, and Thr56 each contribute to the GTP site. GDP-binding residues include Gly54, Lys55, Thr56, and Ser57. A Mg(2+)-binding site is contributed by Thr56. 2 consecutive short sequence motifs (switch) follow at residues Asp65–Phe79 and Asp97–Ser114. The GTP site is built by Ser73 and Thr74. Mg(2+)-binding residues include Thr74 and Asp97. Residue Gly100 participates in GTP binding. At Ser106 the chain carries Phosphoserine; by LRRK2. Residues Asn155, Lys156, Asp158, and Cys159 each coordinate GDP. 3 residues coordinate GTP: Asn155, Lys156, and Asp158. Ser186, Ala187, and Lys188 together coordinate GTP. Ala187 and Lys188 together coordinate GDP. Residues Gln225–Cys244 are disordered. Residues Pro228 to Arg238 are compositionally biased toward pro residues. S-geranylgeranyl cysteine attachment occurs at residues Cys243 and Cys244.

This sequence belongs to the small GTPase superfamily. Rab family. In terms of assembly, interacts with RABIF. Interacts with OPTN. Interacts with LRRK2; interaction facilitates phosphorylation of Ser-106. Interacts with GDI1, GDI2, CHM and CHML; these interactions are disrupted by phosphorylation on Ser-106. Interacts with RILPL1 and RILPL2; these interactions are dependent on phosphorylation of Ser-106. It depends on Mg(2+) as a cofactor. Phosphorylation of Ser-106 in the switch II region by LRRK2 prevents the association of RAB regulatory proteins, including CHM, CHML and RAB GDP dissociation inhibitors GDI1 and GDI2.

The protein localises to the recycling endosome membrane. The protein resides in the lysosome membrane. Its subcellular location is the golgi apparatus membrane. It localises to the cytoplasmic vesicle. It is found in the autophagosome. The enzyme catalyses GTP + H2O = GDP + phosphate + H(+). Its activity is regulated as follows. Regulated by guanine nucleotide exchange factors (GEFs) including DENND3 which promote the exchange of bound GDP for free GTP. Regulated by GTPase activating proteins (GAPs) which increase the GTP hydrolysis activity. Inhibited by GDP dissociation inhibitors (GDIs). Functionally, the small GTPases Rab are key regulators of intracellular membrane trafficking, from the formation of transport vesicles to their fusion with membranes. Rabs cycle between an inactive GDP-bound form and an active GTP-bound form that is able to recruit to membranes different sets of downstream effectors directly responsible for vesicle formation, movement, tethering and fusion. RAB12 may play a role in protein transport from recycling endosomes to lysosomes regulating, for instance, the degradation of the transferrin receptor. Involved in autophagy. This Homo sapiens (Human) protein is Ras-related protein Rab-12.